The chain runs to 373 residues: GPN-loop GTPase 1 (373 aa).

Ala2 carries the N-acetylalanine modification. 29 to 34 (GSGKTT) lines the GTP pocket. The short motif at 86–88 (GPN) is the Gly-Pro-Asn (GPN)-loop; involved in dimer interface element. GTP is bound at residue 189-192 (NKTD). 3 positions are modified to phosphoserine: Ser301, Ser312, and Ser314. The interval 304–373 (LDTGTATGSS…SMAQYWKKNK (70 aa)) is disordered. Thr328 carries the phosphothreonine modification. A compositionally biased stretch (acidic residues) spans 330–342 (DEEDEEADSDTDD). Ser338 is modified (phosphoserine). A Phosphothreonine modification is found at Thr340. Basic and acidic residues predominate over residues 343–355 (IDHRVTEESREEP).

Belongs to the GPN-loop GTPase family. Heterodimer with GPN3. Binds to RNA polymerase II (RNAPII). Interacts directly with RNAPII subunits RPB4 and RPB7 and the CTD of RPB1. Interacts with XPA.

The protein resides in the cytoplasm. The protein localises to the nucleus. Its function is as follows. Small GTPase required for proper nuclear import of RNA polymerase II (RNAPII). May act at an RNAP assembly step prior to nuclear import. Forms an interface between the RNA polymerase II enzyme and chaperone/scaffolding proteins, suggesting that it is required to connect RNA polymerase II to regulators of protein complex formation. May be involved in nuclear localization of XPA. The chain is GPN-loop GTPase 1 from Bos taurus (Bovine).